The primary structure comprises 211 residues: MNSLSTSTFSPVAFSLGLLLVMATAFPTPVPLGEDFKDGTTSKRPFTSPDKTEELIKYILGRISAMRKEMCEKYDKCENSKEALSENNLNLPKMTEKDGCFQSGFNQETCLMRITIGLLEFQIYLDYLQNYYEGDKGNTEAVQISTKALIQLLRQKVKQPEEVSTPNPITGSSLLNKLQTENQWMKNTKMILILRSLEDFLQFSLRAVRIM.

The signal sequence occupies residues methionine 1–alanine 25. A disulfide bond links cysteine 71 and cysteine 77. Serine 80 carries the post-translational modification Phosphoserine. Residues cysteine 100 and cysteine 110 are joined by a disulfide bond.

The protein belongs to the IL-6 superfamily. Component of a hexamer of two molecules each of IL6, IL6R and IL6ST; first binds to IL6R to associate with the signaling subunit IL6ST. Interacts with IL6R (via the N-terminal ectodomain); this interaction may be affected by IL6R-binding with SORL1, hence decreasing IL6 cis signaling. Interacts with SORL1 (via the N-terminal ectodomain); this interaction leads to IL6 internalization and lysosomal degradation. May form a trimeric complex with the soluble SORL1 ectodomain and soluble IL6R receptor; this interaction might stabilize circulating IL6, hence promoting IL6 trans signaling.

It is found in the secreted. In terms of biological role, cytokine with a wide variety of biological functions in immunity, tissue regeneration, and metabolism. Binds to IL6R, then the complex associates to the signaling subunit IL6ST/gp130 to trigger the intracellular IL6-signaling pathway. The interaction with the membrane-bound IL6R and IL6ST stimulates 'classic signaling', whereas the binding of IL6 and soluble IL6R to IL6ST stimulates 'trans-signaling'. Alternatively, 'cluster signaling' occurs when membrane-bound IL6:IL6R complexes on transmitter cells activate IL6ST receptors on neighboring receiver cells. IL6 is a potent inducer of the acute phase response. Rapid production of IL6 contributes to host defense during infection and tissue injury, but excessive IL6 synthesis is involved in disease pathology. In the innate immune response, is synthesized by myeloid cells, such as macrophages and dendritic cells, upon recognition of pathogens through toll-like receptors (TLRs) at the site of infection or tissue injury. In the adaptive immune response, is required for the differentiation of B cells into immunoglobulin-secreting cells. Plays a major role in the differentiation of CD4(+) T cell subsets. Essential factor for the development of T follicular helper (Tfh) cells that are required for the induction of germinal-center formation. Required to drive naive CD4(+) T cells to the Th17 lineage. Also required for proliferation of myeloma cells and the survival of plasmablast cells. Its function is as follows. Acts as an essential factor in bone homeostasis and on vessels directly or indirectly by induction of VEGF, resulting in increased angiogenesis activity and vascular permeability. Induces, through 'trans-signaling' and synergistically with IL1B and TNF, the production of VEGF. Involved in metabolic controls, is discharged into the bloodstream after muscle contraction increasing lipolysis and improving insulin resistance. 'Trans-signaling' in central nervous system also regulates energy and glucose homeostasis. Mediates, through GLP-1, crosstalk between insulin-sensitive tissues, intestinal L cells and pancreatic islets to adapt to changes in insulin demand. Also acts as a myokine. Plays a protective role during liver injury, being required for maintenance of tissue regeneration. Also has a pivotal role in iron metabolism by regulating HAMP/hepcidin expression upon inflammation or bacterial infection. Through activation of IL6ST-YAP-NOTCH pathway, induces inflammation-induced epithelial regeneration. The sequence is that of Interleukin-6 (IL6) from Lama glama (Llama).